Consider the following 467-residue polypeptide: Replication factor A 51 kDa subunit (467 aa).

A DNA-binding region (OB) is located at residues tryptophan 23–threonine 105. The C4-type zinc-finger motif lies at cysteine 313–cysteine 335.

Belongs to the replication factor A protein 1 family. Component of the heterotrimeric canonical replication protein A complex (RPA). In terms of processing, the N-terminus is blocked.

Its subcellular location is the nucleus. Functionally, as part of the heterotrimeric replication protein A complex (RPA/RP-A), binds and stabilizes single-stranded DNA intermediates, that form during DNA replication or upon DNA stress. It prevents their reannealing and in parallel, recruits and activates different proteins and complexes involved in DNA metabolism. Thereby, it plays an essential role both in DNA replication and the cellular response to DNA damage. The polypeptide is Replication factor A 51 kDa subunit (RPA1) (Crithidia fasciculata).